Reading from the N-terminus, the 138-residue chain is Large ribosomal subunit protein uL16 (138 aa).

This sequence belongs to the universal ribosomal protein uL16 family. Part of the 50S ribosomal subunit.

In terms of biological role, binds 23S rRNA and is also seen to make contacts with the A and possibly P site tRNAs. The polypeptide is Large ribosomal subunit protein uL16 (Acidiphilium cryptum (strain JF-5)).